Here is a 294-residue protein sequence, read N- to C-terminus: 33 kDa chaperonin (294 aa).

2 cysteine pairs are disulfide-bonded: cysteine 239–cysteine 241 and cysteine 272–cysteine 275.

It belongs to the HSP33 family. Under oxidizing conditions two disulfide bonds are formed involving the reactive cysteines. Under reducing conditions zinc is bound to the reactive cysteines and the protein is inactive.

The protein localises to the cytoplasm. Redox regulated molecular chaperone. Protects both thermally unfolding and oxidatively damaged proteins from irreversible aggregation. Plays an important role in the bacterial defense system toward oxidative stress. This is 33 kDa chaperonin from Listeria monocytogenes serotype 4a (strain HCC23).